The chain runs to 162 residues: Non-specific lipid transfer protein GPI-anchored 27 (162 aa).

A signal peptide spans 1 to 29 (MAYTNKVAVAVGAAVVFLAVVMNPRWTEA). 4 cysteine pairs are disulfide-bonded: C39–C78, C50–C62, C63–C102, and C76–C110. N68 carries an N-linked (GlcNAc...) asparagine glycan. Residues N124 and N135 are each glycosylated (N-linked (GlcNAc...) asparagine). A lipid anchor (GPI-anchor amidated serine) is attached at S137. Positions 138-162 (VGGKNKVATSMSAFGLVAILLFVMF) are cleaved as a propeptide — removed in mature form.

Belongs to the plant LTP family.

The protein resides in the cell membrane. In terms of biological role, probable lipid transfer protein. In Arabidopsis thaliana (Mouse-ear cress), this protein is Non-specific lipid transfer protein GPI-anchored 27.